We begin with the raw amino-acid sequence, 376 residues long: UDP-4-amino-4,6-dideoxy-N-acetyl-beta-L-altrosamine transaminase (376 aa).

Residues tyrosine 4, 24 to 27 (EILT), alanine 54, and serine 176 each bind substrate. Position 181 is an N6-(pyridoxal phosphate)lysine (lysine 181). Substrate is bound by residues asparagine 226 and 311–314 (QVHY).

It belongs to the DegT/DnrJ/EryC1 family.

It carries out the reaction UDP-4-amino-4,6-dideoxy-N-acetyl-beta-L-altrosamine + 2-oxoglutarate = UDP-2-acetamido-2,6-dideoxy-beta-L-arabino-hex-4-ulose + L-glutamate. Functionally, catalyzes the second step in the biosynthesis of pseudaminic acid, a sialic-acid-like sugar that is used to modify flagellin. Uses UDP-2-acetamido-2,6-dideoxy-beta-L-arabino-4-hexulose as substrate producing UDP-4-amino-4,6-dideoxy-beta-L-AltNAc. The protein is UDP-4-amino-4,6-dideoxy-N-acetyl-beta-L-altrosamine transaminase (pseC) of Campylobacter jejuni subsp. jejuni serotype O:2 (strain ATCC 700819 / NCTC 11168).